The primary structure comprises 130 residues: MSGRGKQGGKARAKAKSRSSRAGLQFPVGRVHRLLRKGNYAERVGAGAPVYLAAVLEYLTAEILELAGNAARDNKKTRIIPRHLQLAIRNDEELNKLLGKVTIAQGGVLPNIQAVLLPKKTESHHKAKGK.

The interval 1-22 (MSGRGKQGGKARAKAKSRSSRA) is disordered. At S2 the chain carries N-acetylserine. S2 is subject to Phosphoserine; by RPS6KA5. Residue R4 is modified to Citrulline; alternate. At R4 the chain carries Symmetric dimethylarginine; by PRMT5; alternate. At K6 the chain carries N6-(2-hydroxyisobutyryl)lysine. A compositionally biased stretch (basic residues) spans 7–19 (QGGKARAKAKSRS). K10 is subject to N6-(2-hydroxyisobutyryl)lysine; alternate. K10 is subject to N6-lactoyllysine; alternate. Residue K10 is modified to N6-succinyllysine; alternate. Residues K14 and K16 each participate in a glycyl lysine isopeptide (Lys-Gly) (interchain with G-Cter in ubiquitin) cross-link. K37 bears the N6-(2-hydroxyisobutyryl)lysine; alternate mark. Residue K37 is modified to N6-(beta-hydroxybutyryl)lysine; alternate. An N6-crotonyllysine; alternate modification is found at K37. N6-(2-hydroxyisobutyryl)lysine is present on residues K75 and K76. K96 is subject to N6-(2-hydroxyisobutyryl)lysine; alternate. N6-succinyllysine; alternate is present on K96. At K96 the chain carries N6-glutaryllysine; alternate. Position 100 is an N6-glutaryllysine (K100). Residue Q105 is modified to N5-methylglutamine. Residue K119 is modified to N6-(2-hydroxyisobutyryl)lysine; alternate. N6-crotonyllysine; alternate occurs at positions 119 and 120. An N6-glutaryllysine; alternate mark is found at K119 and K120. Residue K120 forms a Glycyl lysine isopeptide (Lys-Gly) (interchain with G-Cter in ubiquitin); alternate linkage. The residue at position 121 (T121) is a Phosphothreonine; by DCAF1. The residue at position 126 (K126) is an N6-crotonyllysine; alternate. The residue at position 126 (K126) is an N6-glutaryllysine; alternate.

The protein belongs to the histone H2A family. In terms of assembly, the nucleosome is a histone octamer containing two molecules each of H2A, H2B, H3 and H4 assembled in one H3-H4 heterotetramer and two H2A-H2B heterodimers. The octamer wraps approximately 147 bp of DNA. Interacts with VRK1; the interaction is mediated by the nucleosome acidic patch, a cluster of negatively charged residues of H2A and H2B forming a cleft within the nucleosome core. In terms of processing, deiminated on Arg-4 in granulocytes upon calcium entry. Monoubiquitination of Lys-120 (H2AK119Ub) by RING1, TRIM37 and RNF2/RING2 complex gives a specific tag for epigenetic transcriptional repression and participates in X chromosome inactivation of female mammals. It is involved in the initiation of both imprinted and random X inactivation. Ubiquitinated H2A is enriched in inactive X chromosome chromatin. Ubiquitination of H2A functions downstream of methylation of 'Lys-27' of histone H3 (H3K27me). H2AK119Ub by RNF2/RING2 can also be induced by ultraviolet and may be involved in DNA repair. Following DNA double-strand breaks (DSBs), it is ubiquitinated through 'Lys-63' linkage of ubiquitin moieties by the E2 ligase UBE2N and the E3 ligases RNF8 and RNF168, leading to the recruitment of repair proteins to sites of DNA damage. Ubiquitination at Lys-14 and Lys-16 (H2AK13Ub and H2AK15Ub, respectively) in response to DNA damage is initiated by RNF168 that mediates monoubiquitination at these 2 sites, and 'Lys-63'-linked ubiquitin are then conjugated to monoubiquitin; RNF8 is able to extend 'Lys-63'-linked ubiquitin chains in vitro. H2AK119Ub and ionizing radiation-induced 'Lys-63'-linked ubiquitination (H2AK13Ub and H2AK15Ub) are distinct events. Post-translationally, phosphorylation on Ser-2 (H2AS1ph) is enhanced during mitosis. Phosphorylation on Ser-2 by RPS6KA5/MSK1 directly represses transcription. Acetylation of H3 inhibits Ser-2 phosphorylation by RPS6KA5/MSK1. Phosphorylation at Thr-121 (H2AT120ph) by DCAF1 is present in the regulatory region of many tumor suppresor genes and down-regulates their transcription. In terms of processing, symmetric dimethylation on Arg-4 by the PRDM1/PRMT5 complex may play a crucial role in the germ-cell lineage. Glutamine methylation at Gln-105 (H2AQ104me) by FBL is specifically dedicated to polymerase I. It is present at 35S ribosomal DNA locus and impairs binding of the FACT complex. Post-translationally, crotonylation (Kcr) is specifically present in male germ cells and marks testis-specific genes in post-meiotic cells, including X-linked genes that escape sex chromosome inactivation in haploid cells. Crotonylation marks active promoters and enhancers and confers resistance to transcriptional repressors. It is also associated with post-meiotically activated genes on autosomes. In terms of processing, lactylated in macrophages by EP300/P300 by using lactoyl-CoA directly derived from endogenous or exogenous lactate, leading to stimulates gene transcription.

The protein resides in the nucleus. The protein localises to the chromosome. Core component of nucleosome. Nucleosomes wrap and compact DNA into chromatin, limiting DNA accessibility to the cellular machineries which require DNA as a template. Histones thereby play a central role in transcription regulation, DNA repair, DNA replication and chromosomal stability. DNA accessibility is regulated via a complex set of post-translational modifications of histones, also called histone code, and nucleosome remodeling. The sequence is that of Histone H2A type 1 from Rattus norvegicus (Rat).